A 360-amino-acid chain; its full sequence is Probable butyrate kinase (360 aa).

Belongs to the acetokinase family.

It localises to the cytoplasm. It carries out the reaction butanoate + ATP = butanoyl phosphate + ADP. This Enterococcus faecalis (strain ATCC 700802 / V583) protein is Probable butyrate kinase.